Reading from the N-terminus, the 246-residue chain is Polyhedrin (246 aa).

Belongs to the polyhedrin family.

Its function is as follows. Major component of the virus occlusion bodies, which are large proteinaceous structures (polyhedra), that protect the virus from the outside environment for extended periods until they are ingested by insect larvae. The protein is Polyhedrin (PH) of Spodoptera exigua nuclear polyhedrosis virus (strain US) (SeMNPV).